The sequence spans 612 residues: uncharacterized protein (612 aa).

Residues Ala213 to Arg238 are disordered. A VWFA domain is found at Asp421–Leu610.

Its subcellular location is the cytoplasm. Its function is as follows. Component of the anaerobic respiratory chain that transforms nitrate to dinitrogen (denitrification). Function unknown, but essential for the denitrification process. This is an uncharacterized protein from Pseudomonas aeruginosa (strain ATCC 15692 / DSM 22644 / CIP 104116 / JCM 14847 / LMG 12228 / 1C / PRS 101 / PAO1).